Consider the following 473-residue polypeptide: Glycine receptor subunit beta-type 4 (473 aa).

The N-terminal stretch at 1 to 19 (MHSLFLKILIYSLMQCVLG) is a signal peptide. Over 20–249 (QAEFWDYDEN…EFHVDREITH (230 aa)) the chain is Extracellular. Residues N29, N105, and N151 are each glycosylated (N-linked (GlcNAc...) asparagine). C166 and C180 form a disulfide bridge. The helical transmembrane segment at 250-271 (HIIQSYIPTSLIVIISWFSFWL) threads the bilayer. Residues 272 to 276 (DVEAV) lie on the Cytoplasmic side of the membrane. A helical transmembrane segment spans residues 277–297 (PGRVSLSITTLLTLATQSSAA). At 298 to 308 (RMALPQASDVK) the chain is on the extracellular side. Residues 309 to 329 (AIDVWMGTCMAFVFSAMIEFT) form a helical membrane-spanning segment. Topologically, residues 330-439 (VVNYCVRRKV…NRKNAQKIDR (110 aa)) are cytoplasmic. A helical transmembrane segment spans residues 440–460 (YSRALFPLAFIIFNIFYWIYY). Over 461 to 473 (LKYAGSNSPELLL) the chain is Extracellular.

The protein belongs to the ligand-gated ion channel (TC 1.A.9) family. Glycine receptor (TC 1.A.9.3) subfamily. In terms of assembly, pentamer.

It is found in the postsynaptic cell membrane. It localises to the synapse. Its subcellular location is the cell membrane. In terms of biological role, glycine receptors are ligand-gated chloride channels. Channel opening is triggered by extracellular glycine. Contributes to the generation of inhibitory postsynaptic currents. The polypeptide is Glycine receptor subunit beta-type 4 (Caenorhabditis elegans).